Reading from the N-terminus, the 212-residue chain is Endoplasmic reticulum vesicle protein 25 (212 aa).

The signal sequence occupies residues 1–21; sequence MKSFAACVLLLCALFFEQVFA. The Lumenal segment spans residues 22–181; sequence VRFDIPASTK…TNESTNRRVR (160 aa). A GOLD domain is found at 34–122; sequence QVCIRDFVSE…SRSIELDIES (89 aa). Residues 182–202 form a helical membrane-spanning segment; the sequence is NFSIAVIVVLVALGAWQVNYM. Residues 203–212 lie on the Cytoplasmic side of the membrane; that stretch reads KNFFRAKHII.

It belongs to the EMP24/GP25L family.

The protein resides in the endoplasmic reticulum membrane. The protein localises to the golgi apparatus membrane. In terms of biological role, constituent of COPII-coated endoplasmic reticulum-derived transport vesicles. Required for efficient transport of a subset of secretory proteins to the Golgi. Facilitates retrograde transport from the Golgi to the endoplasmic reticulum. The protein is Endoplasmic reticulum vesicle protein 25 (ERV25) of Kluyveromyces lactis (strain ATCC 8585 / CBS 2359 / DSM 70799 / NBRC 1267 / NRRL Y-1140 / WM37) (Yeast).